The chain runs to 229 residues: PKHD-type hydroxylase BBta_3541 (229 aa).

Residues 78-180 (QIFPPLFNRY…RVASFFWMQS (103 aa)) enclose the Fe2OG dioxygenase domain. Positions 98, 100, and 161 each coordinate Fe cation. R171 contributes to the 2-oxoglutarate binding site.

The cofactor is Fe(2+). Requires L-ascorbate as cofactor.

The sequence is that of PKHD-type hydroxylase BBta_3541 from Bradyrhizobium sp. (strain BTAi1 / ATCC BAA-1182).